The primary structure comprises 341 residues: tRNA N6-adenosine threonylcarbamoyltransferase (341 aa).

Residues histidine 113 and histidine 117 each contribute to the Fe cation site. Residues 141-145, aspartate 174, glycine 187, and asparagine 282 each bind substrate; that span reads LVSGG. Aspartate 310 contacts Fe cation.

Belongs to the KAE1 / TsaD family. Fe(2+) serves as cofactor.

The protein resides in the cytoplasm. The enzyme catalyses L-threonylcarbamoyladenylate + adenosine(37) in tRNA = N(6)-L-threonylcarbamoyladenosine(37) in tRNA + AMP + H(+). Its function is as follows. Required for the formation of a threonylcarbamoyl group on adenosine at position 37 (t(6)A37) in tRNAs that read codons beginning with adenine. Is involved in the transfer of the threonylcarbamoyl moiety of threonylcarbamoyl-AMP (TC-AMP) to the N6 group of A37, together with TsaE and TsaB. TsaD likely plays a direct catalytic role in this reaction. This Porphyromonas gingivalis (strain ATCC BAA-308 / W83) protein is tRNA N6-adenosine threonylcarbamoyltransferase.